We begin with the raw amino-acid sequence, 671 residues long: Protein cereblon (671 aa).

The span at 1–11 shows a compositional bias: acidic residues; it reads MDGEEAADIDE. Disordered regions lie at residues 1–59, 104–130, and 150–187; these read MDGE…VDGD, LTGT…PAQP, and GHNV…DAEA. 2 stretches are compositionally biased toward low complexity: residues 39–51 and 105–115; these read QQQQ…SSGE and TGTTTPTPTAP. Polar residues predominate over residues 162–173; the sequence is SISSRHSGSDMS. Residues 309–537 form the Lon N-terminal domain; the sequence is RMLIFMHQHI…IIGSTLKQES (229 aa). In terms of domain architecture, CULT spans 536 to 645; the sequence is ESLFYCRYCN…LAGSSVRIGK (110 aa). Residues C541, C544, C610, and C613 each contribute to the Zn(2+) site.

The protein belongs to the CRBN family. As to quaternary structure, likely a component of a DCX (DDB1-CUL4-X-box) protein ligase complex. May interact with pic/DDB1. Post-translationally, ubiquitinated.

The protein resides in the nucleus. It participates in protein modification; protein ubiquitination. Substrate recognition component of a DCX (DDB1-CUL4-X-box) E3 protein ligase complex that mediates the ubiquitination and subsequent proteasomal degradation of target proteins. Has an essential role in mediating growth by negatively regulating insulin signaling. It also has a role in maintaining presynaptic function in the neuromuscular junction synapses of third-instar larvae. In Drosophila grimshawi (Hawaiian fruit fly), this protein is Protein cereblon.